Reading from the N-terminus, the 89-residue chain is Small ribosomal subunit protein uS14A (89 aa).

This sequence belongs to the universal ribosomal protein uS14 family. As to quaternary structure, part of the 30S ribosomal subunit. Contacts proteins S3 and S10.

Binds 16S rRNA, required for the assembly of 30S particles and may also be responsible for determining the conformation of the 16S rRNA at the A site. In Streptococcus equi subsp. zooepidemicus (strain MGCS10565), this protein is Small ribosomal subunit protein uS14A.